A 484-amino-acid chain; its full sequence is Phosphatidylinositol N-acetylglucosaminyltransferase subunit A (484 aa).

At 1 to 421 the chain is on the cytoplasmic side; that stretch reads MACRGGAGNG…RLDRLISHCG (421 aa). Serine 21 and serine 24 each carry phosphoserine. Residues 422–442 traverse the membrane as a helical segment; that stretch reads PVTGYIFALLAVFNFLFLIFL. The Lumenal portion of the chain corresponds to 443-484; sequence RWMTPDSIIDVAIDATGPRGAWTNNYSHSKRGGENNEISETR. An N-linked (GlcNAc...) asparagine glycan is attached at asparagine 467.

Belongs to the glycosyltransferase group 1 family. Glycosyltransferase 4 subfamily. Component of the glycosylphosphatidylinositol-N-acetylglucosaminyltransferase (GPI-GnT) complex composed at least by PIGA, PIGC, PIGH, PIGP, PIGQ, PIGY and DPM2. Interacts with PIGC, PIGH, PIGP, PIGQ and DPM2. Interacts directly with PIGY; this interaction regulates glycosylphosphatidylinositol-N-acetylglucosaminyltransferase activity. Interacts with PIGQ.

The protein localises to the endoplasmic reticulum membrane. It catalyses the reaction a 1,2-diacyl-sn-glycero-3-phospho-(1D-myo-inositol) + UDP-N-acetyl-alpha-D-glucosamine = a 6-(N-acetyl-alpha-D-glucosaminyl)-1-(1,2-diacyl-sn-glycero-3-phospho)-1D-myo-inositol + UDP + H(+). The protein operates within glycolipid biosynthesis; glycosylphosphatidylinositol-anchor biosynthesis. Functionally, catalytic subunit of the glycosylphosphatidylinositol-N-acetylglucosaminyltransferase (GPI-GnT) complex that catalyzes the transfer of N-acetylglucosamine from UDP-N-acetylglucosamine to phosphatidylinositol and participates in the first step of GPI biosynthesis. The polypeptide is Phosphatidylinositol N-acetylglucosaminyltransferase subunit A (Homo sapiens (Human)).